The following is a 349-amino-acid chain: Phenylalanine--tRNA ligase alpha subunit (349 aa).

Position 258 (Glu258) interacts with Mg(2+).

The protein belongs to the class-II aminoacyl-tRNA synthetase family. Phe-tRNA synthetase alpha subunit type 1 subfamily. Tetramer of two alpha and two beta subunits. Mg(2+) is required as a cofactor.

It is found in the cytoplasm. It catalyses the reaction tRNA(Phe) + L-phenylalanine + ATP = L-phenylalanyl-tRNA(Phe) + AMP + diphosphate + H(+). The protein is Phenylalanine--tRNA ligase alpha subunit of Rickettsia canadensis (strain McKiel).